The primary structure comprises 411 residues: Coiled-coil domain-containing protein 159 (411 aa).

Residues 84–113 (EQAGKSGAWEKEWDSEPQPHEGTPCSSSDV) are disordered. Positions 91-102 (AWEKEWDSEPQP) are enriched in basic and acidic residues. Residues 269 to 305 (EELELVREEVTFIYQKLQDQEDEISENLLNIQKMQKT) are a coiled coil. A disordered region spans residues 372-411 (RASSLRGQKGHQCKSSQCPSWDSDSDWERPFSKSGSYPPA). The segment covering 384 to 393 (CKSSQCPSWD) has biased composition (polar residues).

In terms of assembly, interacts with DYNLT2. Interacts with GGNBP1. Interacts with OSBP2. As to expression, expressed in spermatids but undetectable in the spermatozoon (at protein level). Highly expressed in the testis (at protein level).

In terms of biological role, functions during spermatid development; may participate in the centrosome reduction procedure of spermatids and is required for the formation of the connecting piece/sperm head-tail coupling apparatus (HTCA) and the correct and tight attachment of the flagellum to the nuclear envelope. The chain is Coiled-coil domain-containing protein 159 (Ccdc159) from Mus musculus (Mouse).